A 410-amino-acid polypeptide reads, in one-letter code: Translation initiation factor 2 subunit gamma (410 aa).

Residues 6–203 form the tr-type G domain; that stretch reads QSEVNIGMVG…AIQDFIPTPE (198 aa). The segment at 15–22 is G1; it reads GHVDHGKT. Positions 18, 22, 43, and 45 each coordinate Mg(2+). 18-23 contacts GTP; it reads DHGKTS. The G2 stretch occupies residues 43–47; it reads GISIR. Zn(2+) is bound by residues cysteine 58, cysteine 61, cysteine 73, and cysteine 76. The segment at 90–93 is G3; that stretch reads DAPG. GTP contacts are provided by residues 146–149 and 181–183; these read NKID and SAH. The G4 stretch occupies residues 146 to 149; that stretch reads NKID. The tract at residues 181–183 is G5; it reads SAH.

It belongs to the TRAFAC class translation factor GTPase superfamily. Classic translation factor GTPase family. EIF2G subfamily. In terms of assembly, heterotrimer composed of an alpha, a beta and a gamma chain. It depends on Mg(2+) as a cofactor.

The catalysed reaction is GTP + H2O = GDP + phosphate + H(+). Functionally, eIF-2 functions in the early steps of protein synthesis by forming a ternary complex with GTP and initiator tRNA. This is Translation initiation factor 2 subunit gamma from Methanococcus maripaludis (strain DSM 14266 / JCM 13030 / NBRC 101832 / S2 / LL).